The following is a 2179-amino-acid chain: Genome polyprotein (2179 aa).

The disordered stretch occupies residues 1–20 (MGAQVSTQKSGSHENQNILT). The N-myristoyl glycine; by host moiety is linked to residue G2. Residues 2 to 1491 (GAQVSTQKSG…AMNQASMIIN (1490 aa)) lie on the Cytoplasmic side of the membrane. The amphipathic alpha-helix stretch occupies residues 564 to 584 (ALTEGLGDELEEVIVEKTKQT). Catalysis depends on for protease 2A activity residues H876 and D894. Residues C911 and C913 each coordinate Zn(2+). C965 acts as the For protease 2A activity in catalysis. Zn(2+) contacts are provided by C971 and H973. Positions 1101-1173 (NDGWFRKFND…HISNPTQEKR (73 aa)) are membrane-binding. The oligomerization stretch occupies residues 1101–1239 (NDGWFRKFND…TPGSGKSLTT (139 aa)). Positions 1122–1126 (ANKIS) are RNA-binding. An SF3 helicase domain is found at 1205 to 1361 (KNKMVNYMQF…TTYTKNGKLN (157 aa)). Zn(2+) contacts are provided by C1369, C1372, C1381, and C1386. The C4-type zinc-finger motif lies at 1369 to 1386 (CKDCHQPSNFKKCCPLVC). The RNA-binding stretch occupies residues 1413–1420 (DFKSKMQI). The tract at residues 1424–1429 (LETLFQ) is oligomerization. Residues 1492-1507 (TILMFVSTLGIVYVIY) lie within the membrane without spanning it. Topologically, residues 1508 to 2179 (KLFAQTQGPY…VLRRRWLDLF (672 aa)) are cytoplasmic. The residue at position 1517 (Y1517) is an O-(5'-phospho-RNA)-tyrosine. Residues 1538–1715 (GPNTEFALSL…FSAQLKKQYF (178 aa)) enclose the Peptidase C3 domain. Catalysis depends on for protease 3C activity residues H1577, E1608, and C1683. The region spanning 1946–2060 (GHLMAFDYSN…SYPYELDPQV (115 aa)) is the RdRp catalytic domain. Mg(2+)-binding residues include D1952 and D2046.

It belongs to the picornaviruses polyprotein family. As to quaternary structure, interacts with capsid protein VP1 and capsid protein VP3 to form heterotrimeric protomers. In terms of assembly, interacts with capsid protein VP0, and capsid protein VP3 to form heterotrimeric protomers. Five protomers subsequently associate to form pentamers which serve as building blocks for the capsid. Interacts with capsid protein VP2, capsid protein VP3 and capsid protein VP4 following cleavage of capsid protein VP0. Interacts with host ICAM1. Interacts with capsid protein VP1 and capsid protein VP3 in the mature capsid. As to quaternary structure, interacts with capsid protein VP0 and capsid protein VP1 to form heterotrimeric protomers. Five protomers subsequently associate to form pentamers which serve as building blocks for the capsid. Interacts with capsid protein VP4 in the mature capsid. Interacts with protein 2C; this interaction may be important for virion morphogenesis. In terms of assembly, interacts with capsid protein VP1 and capsid protein VP3. Homodimer. As to quaternary structure, homohexamer; forms a hexameric ring structure with 6-fold symmetry characteristic of AAA+ ATPases. Interacts (via N-terminus) with host RTN3 (via reticulon domain); this interaction is important for viral replication. Interacts with capsid protein VP3; this interaction may be important for virion morphogenesis. In terms of assembly, interacts with protein 3CD. Homodimer. Interacts with host GBF1. Interacts (via GOLD domain) with host ACBD3 (via GOLD domain); this interaction allows the formation of a viral protein 3A/ACBD3 heterotetramer with a 2:2 stoichiometry, which will stimulate the recruitment of host PI4KB in order to synthesize PI4P at the viral RNA replication sites. As to quaternary structure, interacts with RNA-directed RNA polymerase. In terms of assembly, interacts with protein 3AB and with RNA-directed RNA polymerase. Interacts with Viral protein genome-linked and with protein 3CD. Mg(2+) is required as a cofactor. In terms of processing, specific enzymatic cleavages in vivo by the viral proteases yield processing intermediates and the mature proteins. Myristoylation is required for the formation of pentamers during virus assembly. Further assembly of 12 pentamers and a molecule of genomic RNA generates the provirion. Post-translationally, during virion maturation, immature virions are rendered infectious following cleavage of VP0 into VP4 and VP2. This maturation seems to be an autocatalytic event triggered by the presence of RNA in the capsid and it is followed by a conformational change infectious virion. In terms of processing, myristoylation is required during RNA encapsidation and formation of the mature virus particle. VPg is uridylylated by the polymerase into VPg-pUpU. This acts as a nucleotide-peptide primer for the genomic RNA replication.

It localises to the virion. Its subcellular location is the host cytoplasm. It is found in the host cytoplasmic vesicle membrane. The protein localises to the host nucleus. The catalysed reaction is a ribonucleoside 5'-triphosphate + H2O = a ribonucleoside 5'-diphosphate + phosphate + H(+). The enzyme catalyses Selective cleavage of Tyr-|-Gly bond in the picornavirus polyprotein.. It catalyses the reaction RNA(n) + a ribonucleoside 5'-triphosphate = RNA(n+1) + diphosphate. It carries out the reaction Selective cleavage of Gln-|-Gly bond in the poliovirus polyprotein. In other picornavirus reactions Glu may be substituted for Gln, and Ser or Thr for Gly.. Its activity is regulated as follows. Replication or transcription is subject to high level of random mutations by the nucleotide analog ribavirin. Functionally, forms an icosahedral capsid of pseudo T=3 symmetry with capsid proteins VP2 and VP3. The capsid is 300 Angstroms in diameter, composed of 60 copies of each capsid protein and enclosing the viral positive strand RNA genome. Capsid protein VP1 mainly forms the vertices of the capsid. Capsid protein VP1 interacts with host ICAM1 to provide virion attachment to target host cells. This attachment induces virion internalization. Tyrosine kinases are probably involved in the entry process. After binding to its receptor, the capsid undergoes conformational changes. Capsid protein VP1 N-terminus (that contains an amphipathic alpha-helix) and capsid protein VP4 are externalized. Together, they shape a pore in the host membrane through which viral genome is translocated to host cell cytoplasm. After genome has been released, the channel shrinks. Its function is as follows. Forms an icosahedral capsid of pseudo T=3 symmetry with capsid proteins VP2 and VP3. The capsid is 300 Angstroms in diameter, composed of 60 copies of each capsid protein and enclosing the viral positive strand RNA genome. Lies on the inner surface of the capsid shell. After binding to the host receptor, the capsid undergoes conformational changes. Capsid protein VP4 is released, Capsid protein VP1 N-terminus is externalized, and together, they shape a pore in the host membrane through which the viral genome is translocated into the host cell cytoplasm. In terms of biological role, component of immature procapsids, which is cleaved into capsid proteins VP4 and VP2 after maturation. Allows the capsid to remain inactive before the maturation step. Functionally, cysteine protease that cleaves viral polyprotein and specific host proteins. It is responsible for the autocatalytic cleavage between the P1 and P2 regions, which is the first cleavage occurring in the polyprotein. Also cleaves the host translation initiation factor EIF4G1, in order to shut down the capped cellular mRNA translation. Inhibits the host nucleus-cytoplasm protein and RNA trafficking by cleaving host members of the nuclear pores including NUP62 and NUP153. Counteracts stress granule formation probably by antagonizing its assembly or promoting its dissassembly. Its function is as follows. Plays an essential role in the virus replication cycle by acting as a viroporin. Creates a pore in the host endoplasmic reticulum and as a consequence releases Ca2+ in the cytoplasm of infected cell. In turn, high levels of cytoplasmic calcium may trigger membrane trafficking and transport of viral ER-associated proteins to viroplasms, sites of viral genome replication. Induces and associates with structural rearrangements of intracellular membranes. Displays RNA-binding, nucleotide binding and NTPase activities. May play a role in virion morphogenesis and viral RNA encapsidation by interacting with the capsid protein VP3. In terms of biological role, localizes the viral replication complex to the surface of membranous vesicles. Together with protein 3CD binds the Cis-Active RNA Element (CRE) which is involved in RNA synthesis initiation. Acts as a cofactor to stimulate the activity of 3D polymerase, maybe through a nucleid acid chaperone activity. Functionally, localizes the viral replication complex to the surface of membranous vesicles. It inhibits host cell endoplasmic reticulum-to-Golgi apparatus transport and causes the disassembly of the Golgi complex, possibly through GBF1 interaction. This would result in depletion of MHC, trail receptors and IFN receptors at the host cell surface. Plays an essential role in viral RNA replication by recruiting ACBD3 and PI4KB at the viral replication sites, thereby allowing the formation of the rearranged membranous structures where viral replication takes place. Its function is as follows. Acts as a primer for viral RNA replication and remains covalently bound to viral genomic RNA. VPg is uridylylated prior to priming replication into VPg-pUpU. The oriI viral genomic sequence may act as a template for this. The VPg-pUpU is then used as primer on the genomic RNA poly(A) by the RNA-dependent RNA polymerase to replicate the viral genome. During genome replication, the VPg-RNA linkage is removed by the host TDP2, thereby accelerating replication. During the late stage of the replication cycle, host TDP2 is excluded from sites of viral RNA synthesis and encapsidation, allowing for the generation of progeny virions. Involved in the viral replication complex and viral polypeptide maturation. It exhibits protease activity with a specificity and catalytic efficiency that is different from protease 3C. Protein 3CD lacks polymerase activity. Protein 3CD binds to the 5'UTR of the viral genome. In terms of biological role, major viral protease that mediates proteolytic processing of the polyprotein. Cleaves host EIF5B, contributing to host translation shutoff. Cleaves also host PABPC1, contributing to host translation shutoff. Cleaves host NLRP1, triggers host N-glycine-mediated degradation of the autoinhibitory NLRP1 N-terminal fragment. Functionally, replicates the viral genomic RNA on the surface of intracellular membranes. May form linear arrays of subunits that propagate along a strong head-to-tail interaction called interface-I. Covalently attaches UMP to a tyrosine of VPg, which is used to prime RNA synthesis. The positive stranded RNA genome is first replicated at virus induced membranous vesicles, creating a dsRNA genomic replication form. This dsRNA is then used as template to synthesize positive stranded RNA genomes. ss(+)RNA genomes are either translated, replicated or encapsidated. The polypeptide is Genome polyprotein (Homo sapiens (Human)).